A 110-amino-acid polypeptide reads, in one-letter code: MATAEPAPAWWKLTFLRKKKSEPKVLYEIAGDHSSNGGEAPGTTDAATDSQFNARLERIVDKTATKGRHVKVSHSGRFKEKKRIRSTLAENPELFPEAETTANENNKSGK.

Disordered stretches follow at residues 29 to 51 (IAGD…TDSQ) and 65 to 110 (TKGR…KSGK). Positions 65–85 (TKGRHVKVSHSGRFKEKKRIR) are enriched in basic residues. The span at 100-110 (TTANENNKSGK) shows a compositional bias: polar residues.

This sequence belongs to the PRR15 family.

This is Proline-rich protein 15-like protein A (prr15la) from Danio rerio (Zebrafish).